Consider the following 612-residue polypeptide: Serine/threonine-protein kinase Nek1 (612 aa).

In terms of domain architecture, Protein kinase spans Tyr4–Leu258. Residues Ile10–Ala18 and Lys33 contribute to the ATP site. Catalysis depends on Asp129, which acts as the Proton acceptor. The segment covering Ile503–Asn513 has biased composition (polar residues). The tract at residues Ile503–Pro534 is disordered. Residues Ala514 to Ser527 are compositionally biased toward low complexity.

Belongs to the protein kinase superfamily. NEK Ser/Thr protein kinase family. NIMA subfamily.

It carries out the reaction L-seryl-[protein] + ATP = O-phospho-L-seryl-[protein] + ADP + H(+). The enzyme catalyses L-threonyl-[protein] + ATP = O-phospho-L-threonyl-[protein] + ADP + H(+). Its function is as follows. May be involved in plant development processes. The polypeptide is Serine/threonine-protein kinase Nek1 (NEK1) (Arabidopsis thaliana (Mouse-ear cress)).